Here is a 788-residue protein sequence, read N- to C-terminus: Elongator complex protein 2 (788 aa).

8 WD repeats span residues 13–51 (GANK…NKGV), 57–96 (GHEA…HLQC), 102–139 (HYSK…DEFG), 200–243 (GHED…LIDD), 279–318 (GHDD…GIWV), 336–377 (GSSG…ICDQ), 383–422 (GATK…ASGR), and 437–475 (IHGY…AGML). Positions 490–530 (PDSATVPVLGLSNKAGEDDANEDDEEEEGGNKETPDITDPL) are disordered. Ser492 is modified (phosphoserine). Residues 507–517 (DDANEDDEEEE) show a composition bias toward acidic residues. WD repeat units lie at residues 556 to 600 (GHGF…EIKP), 604 to 643 (FHSL…NTFE), 651 to 692 (PHTR…ADDY), 699 to 742 (KHTK…FELI), and 750 to 788 (TPAD…LAYE).

Belongs to the WD repeat ELP2 family. Component of the elongator complex which consists of ELP1/IKI3, ELP2, ELP3, ELP4, ELP5/IKI1 and ELP6. The elongator complex is composed of two copies of the Elp123 subcomplex (composed of ELP1/IKI3, ELP2 and ELP3) and two copies of the Elp456 subcomplex (composed of ELP4, ELP5/IKI1 and ELP6). The Elp123 subcomplex forms a two-lobed scaffold, which binds the Elp456 subcomplex asymmetrically. In the complex, ELP2 interacts with ELP1/IKI3. In each lobe, ELP2 is tightly sandwiched between ELP1/IKI3 and ELP3. The Elp123 subcomplex binds tRNA through ELP1/IKI3 and ELP3 and can bind 2 tRNAs simultaneously. tRNA-binding induces conformational rearrangements which precisely position the targeted anticodon base in the active site. The Elp456 subcomplex binds tRNA and has ATPase activity. Interacts with KTI11/DPH3.

It is found in the cytoplasm. Its subcellular location is the nucleus. It functions in the pathway tRNA modification; 5-methoxycarbonylmethyl-2-thiouridine-tRNA biosynthesis. Functionally, component of the elongator complex, a multiprotein complex which is required for multiple tRNA modifications, including mcm5U (5-methoxycarbonylmethyl uridine), mcm5s2U (5-methoxycarbonylmethyl-2-thiouridine), and ncm5U (5-carbamoylmethyl uridine). The elongator complex catalyzes formation of carboxymethyluridine in the wobble base at position 34 in tRNAs. It functions as a gamma-toxin target (TOT); disruption of the complex confers resistance to Kluyveromyces lactis toxin zymocin (pGKL1 killer toxin). May also be involved in sensitivity to Pichia inositovora toxin. ELP2 binds to microtubules. Independently, ELP2 may be involved in polarized exocytosis. The chain is Elongator complex protein 2 (ELP2) from Saccharomyces cerevisiae (strain ATCC 204508 / S288c) (Baker's yeast).